The chain runs to 141 residues: Putative antiporter subunit mnhB2 (141 aa).

4 helical membrane passes run 10 to 30, 35 to 55, 70 to 90, and 114 to 134; these read TVTK…FFAG, GGGF…FLAF, ILMI…MFFG, and ITLF…TVML.

It belongs to the CPA3 antiporters (TC 2.A.63) subunit B family. May form a heterooligomeric complex that consists of seven subunits: mnhA2, mnhB2, mnhC2, mnhD2, mnhE2, mnhF2 and mnhG2.

It is found in the cell membrane. This chain is Putative antiporter subunit mnhB2 (mnhB2), found in Staphylococcus aureus (strain Mu3 / ATCC 700698).